The chain runs to 292 residues: Putative gonadotropin-releasing hormone II receptor (292 aa).

The Extracellular portion of the chain corresponds to 1 to 28; it reads MSAGNGTPWDATWNITVQWLAVDIACRT. Cys26 and Cys101 are disulfide-bonded. Residues 29 to 49 form a helical membrane-spanning segment; it reads LMFLKLMATYSAAFLPVVIGL. At 50–67 the chain is on the cytoplasmic side; it reads DRQAAVLNPLGSRSGVRK. A helical transmembrane segment spans residues 68–88; it reads LLGAAWGLSFLLAFPQLFLFH. Residues 89 to 115 lie on the Extracellular side of the membrane; that stretch reads TVHCAGPVPFTQCVTKGSFKAQWQETT. Residues 116–136 traverse the membrane as a helical segment; sequence YNLFTFCCLFLLPLTAMAICY. Residues 137–177 lie on the Cytoplasmic side of the membrane; that stretch reads SRIVLSVSRPQTRKGSHAPAGEFALPRSFDNCPRVRLRALR. The helical transmembrane segment at 178–198 threads the bilayer; sequence LALLILLTFILCWTPYYLLGM. The Extracellular segment spans residues 199-216; the sequence is WYWFSPTMLTEVPPSLSH. The chain crosses the membrane as a helical span at residues 217–237; the sequence is ILFLLGLLNAPLDPLLYGAFT. Residues 238 to 292 are Cytoplasmic-facing; that stretch reads LGCRRGHQELSIDSSKEGSGRMLQEEIHAFRQLEVQKTVTSRRAGETKGISITSI.

It belongs to the G-protein coupled receptor 1 family. In terms of processing, phosphorylated on the C-terminal cytoplasmic tail. Expressed in many tissues.

It localises to the cell membrane. Its function is as follows. Putative receptor for gonadotropin releasing hormone II (GnRH II) which is most probably non-functional. The polypeptide is Putative gonadotropin-releasing hormone II receptor (GNRHR2) (Homo sapiens (Human)).